The following is a 522-amino-acid chain: Hydroxymethylglutaryl-CoA synthase, cytoplasmic (522 aa).

Residues aspartate 43 and alanine 44 each coordinate (3S)-3-hydroxy-3-methylglutaryl-CoA. Glutamate 95 acts as the Proton donor/acceptor in catalysis. Positions 129, 167, 171, 221, 264, 273, 344, and 378 each coordinate (3S)-3-hydroxy-3-methylglutaryl-CoA. Residue cysteine 129 is the Acyl-thioester intermediate of the active site. Catalysis depends on histidine 264, which acts as the Proton donor/acceptor.

It belongs to the thiolase-like superfamily. HMG-CoA synthase family. As to quaternary structure, homodimer.

The protein resides in the cytoplasm. The catalysed reaction is acetoacetyl-CoA + acetyl-CoA + H2O = (3S)-3-hydroxy-3-methylglutaryl-CoA + CoA + H(+). The protein operates within metabolic intermediate biosynthesis; (R)-mevalonate biosynthesis; (R)-mevalonate from acetyl-CoA: step 2/3. In terms of biological role, catalyzes the condensation of acetyl-CoA with acetoacetyl-CoA to form HMG-CoA, which is converted by HMG-CoA reductase (HMGCR) into mevalonate, a precursor for cholesterol synthesis. This is Hydroxymethylglutaryl-CoA synthase, cytoplasmic (HMGCS1) from Gallus gallus (Chicken).